We begin with the raw amino-acid sequence, 237 residues long: Phosphoribosylaminoimidazole-succinocarboxamide synthase (237 aa).

Belongs to the SAICAR synthetase family.

It catalyses the reaction 5-amino-1-(5-phospho-D-ribosyl)imidazole-4-carboxylate + L-aspartate + ATP = (2S)-2-[5-amino-1-(5-phospho-beta-D-ribosyl)imidazole-4-carboxamido]succinate + ADP + phosphate + 2 H(+). It participates in purine metabolism; IMP biosynthesis via de novo pathway; 5-amino-1-(5-phospho-D-ribosyl)imidazole-4-carboxamide from 5-amino-1-(5-phospho-D-ribosyl)imidazole-4-carboxylate: step 1/2. In Yersinia pseudotuberculosis serotype O:1b (strain IP 31758), this protein is Phosphoribosylaminoimidazole-succinocarboxamide synthase.